An 81-amino-acid polypeptide reads, in one-letter code: High-potential iron-sulfur protein (81 aa).

4 residues coordinate [4Fe-4S] cluster: C43, C46, C59, and C73.

The protein belongs to the high-potential iron-sulfur protein (HiPIP) family. Homodimer.

Its function is as follows. Specific class of high-redox-potential 4Fe-4S ferredoxins. Functions in anaerobic electron transport in most purple and in some other photosynthetic bacteria and in at least one genus (Paracoccus) of halophilic, denitrifying bacteria. This is High-potential iron-sulfur protein (hip) from Thiococcus pfennigii (Thiocapsa pfennigii).